Consider the following 98-residue polypeptide: Aspartyl/glutamyl-tRNA(Asn/Gln) amidotransferase subunit C (98 aa).

Belongs to the GatC family. In terms of assembly, heterotrimer of A, B and C subunits.

The catalysed reaction is L-glutamyl-tRNA(Gln) + L-glutamine + ATP + H2O = L-glutaminyl-tRNA(Gln) + L-glutamate + ADP + phosphate + H(+). The enzyme catalyses L-aspartyl-tRNA(Asn) + L-glutamine + ATP + H2O = L-asparaginyl-tRNA(Asn) + L-glutamate + ADP + phosphate + 2 H(+). Allows the formation of correctly charged Asn-tRNA(Asn) or Gln-tRNA(Gln) through the transamidation of misacylated Asp-tRNA(Asn) or Glu-tRNA(Gln) in organisms which lack either or both of asparaginyl-tRNA or glutaminyl-tRNA synthetases. The reaction takes place in the presence of glutamine and ATP through an activated phospho-Asp-tRNA(Asn) or phospho-Glu-tRNA(Gln). In Roseiflexus castenholzii (strain DSM 13941 / HLO8), this protein is Aspartyl/glutamyl-tRNA(Asn/Gln) amidotransferase subunit C.